The chain runs to 306 residues: Aspartate carbamoyltransferase catalytic subunit (306 aa).

Residues R51 and T52 each contribute to the carbamoyl phosphate site. An L-aspartate-binding site is contributed by K79. Residues R101, H130, and Q133 each contribute to the carbamoyl phosphate site. 2 residues coordinate L-aspartate: R163 and R215. The carbamoyl phosphate site is built by G256 and P257.

Belongs to the aspartate/ornithine carbamoyltransferase superfamily. ATCase family. In terms of assembly, heterododecamer (2C3:3R2) of six catalytic PyrB chains organized as two trimers (C3), and six regulatory PyrI chains organized as three dimers (R2).

The catalysed reaction is carbamoyl phosphate + L-aspartate = N-carbamoyl-L-aspartate + phosphate + H(+). The protein operates within pyrimidine metabolism; UMP biosynthesis via de novo pathway; (S)-dihydroorotate from bicarbonate: step 2/3. Its function is as follows. Catalyzes the condensation of carbamoyl phosphate and aspartate to form carbamoyl aspartate and inorganic phosphate, the committed step in the de novo pyrimidine nucleotide biosynthesis pathway. The sequence is that of Aspartate carbamoyltransferase catalytic subunit from Ehrlichia ruminantium (strain Welgevonden).